The following is a 205-amino-acid chain: Holliday junction branch migration complex subunit RuvA (205 aa).

The domain I stretch occupies residues methionine 1 to alanine 64. Positions asparagine 65–isoleucine 143 are domain II. A flexible linker region spans residues glycine 144 to glycine 152. Positions alanine 153–arginine 205 are domain III.

This sequence belongs to the RuvA family. Homotetramer. Forms an RuvA(8)-RuvB(12)-Holliday junction (HJ) complex. HJ DNA is sandwiched between 2 RuvA tetramers; dsDNA enters through RuvA and exits via RuvB. An RuvB hexamer assembles on each DNA strand where it exits the tetramer. Each RuvB hexamer is contacted by two RuvA subunits (via domain III) on 2 adjacent RuvB subunits; this complex drives branch migration. In the full resolvosome a probable DNA-RuvA(4)-RuvB(12)-RuvC(2) complex forms which resolves the HJ.

It is found in the cytoplasm. In terms of biological role, the RuvA-RuvB-RuvC complex processes Holliday junction (HJ) DNA during genetic recombination and DNA repair, while the RuvA-RuvB complex plays an important role in the rescue of blocked DNA replication forks via replication fork reversal (RFR). RuvA specifically binds to HJ cruciform DNA, conferring on it an open structure. The RuvB hexamer acts as an ATP-dependent pump, pulling dsDNA into and through the RuvAB complex. HJ branch migration allows RuvC to scan DNA until it finds its consensus sequence, where it cleaves and resolves the cruciform DNA. The sequence is that of Holliday junction branch migration complex subunit RuvA from Brucella anthropi (strain ATCC 49188 / DSM 6882 / CCUG 24695 / JCM 21032 / LMG 3331 / NBRC 15819 / NCTC 12168 / Alc 37) (Ochrobactrum anthropi).